Reading from the N-terminus, the 108-residue chain is Malonate decarboxylase acyl carrier protein (108 aa).

S35 is subject to O-(phosphoribosyl dephospho-coenzyme A)serine.

Belongs to the MdcC family. In terms of processing, covalently binds the prosthetic group of malonate decarboxylase.

It localises to the cytoplasm. Subunit of malonate decarboxylase, it is an acyl carrier protein to which acetyl and malonyl thioester residues are bound via a 2'-(5''-phosphoribosyl)-3'-dephospho-CoA prosthetic group and turn over during the catalytic mechanism. This chain is Malonate decarboxylase acyl carrier protein, found in Burkholderia cepacia (Pseudomonas cepacia).